The primary structure comprises 782 residues: E3 ubiquitin-protein ligase SopA (782 aa).

Positions 137–171 (VSVSANNRPTVSEGRTPPVSPSLSLQATSSPSSPA) are disordered. Over residues 157–171 (PSLSLQATSSPSSPA) the composition is skewed to low complexity. Residue C753 is the Glycyl thioester intermediate of the active site.

The protein belongs to the SopA E3 ligase family. In terms of processing, ubiquitinated in the presence of host E1 ubiquitin-activating enzyme, E2 ubiquitin-conjugating enzyme and ubiquitin.

The protein localises to the secreted. The protein resides in the host cell. It carries out the reaction S-ubiquitinyl-[E2 ubiquitin-conjugating enzyme]-L-cysteine + [acceptor protein]-L-lysine = [E2 ubiquitin-conjugating enzyme]-L-cysteine + N(6)-ubiquitinyl-[acceptor protein]-L-lysine.. Its function is as follows. Effector proteins function to alter host cell physiology and promote bacterial survival in host tissues. This protein is an E3 ubiquitin ligase that interferes with host's ubiquitination pathway. The protein is E3 ubiquitin-protein ligase SopA (sopA) of Salmonella enteritidis PT4 (strain P125109).